A 313-amino-acid chain; its full sequence is uncharacterized protein (313 aa).

3 consecutive transmembrane segments (helical) span residues 19–41, 51–68, and 81–103; these read GLAV…AGFL, AIIG…IFFL, and IAEF…DFAI.

It localises to the cell membrane. This is an uncharacterized protein from Aquifex aeolicus (strain VF5).